Consider the following 188-residue polypeptide: Pyridoxal 5'-phosphate synthase subunit PdxT (188 aa).

47-49 (GES) is an L-glutamine binding site. Cys79 functions as the Nucleophile in the catalytic mechanism. L-glutamine contacts are provided by residues Arg106 and 134-135 (IR). Active-site charge relay system residues include His169 and Glu171.

This sequence belongs to the glutaminase PdxT/SNO family. As to quaternary structure, in the presence of PdxS, forms a dodecamer of heterodimers. Only shows activity in the heterodimer.

It carries out the reaction aldehydo-D-ribose 5-phosphate + D-glyceraldehyde 3-phosphate + L-glutamine = pyridoxal 5'-phosphate + L-glutamate + phosphate + 3 H2O + H(+). The enzyme catalyses L-glutamine + H2O = L-glutamate + NH4(+). Its pathway is cofactor biosynthesis; pyridoxal 5'-phosphate biosynthesis. Its function is as follows. Catalyzes the hydrolysis of glutamine to glutamate and ammonia as part of the biosynthesis of pyridoxal 5'-phosphate. The resulting ammonia molecule is channeled to the active site of PdxS. The sequence is that of Pyridoxal 5'-phosphate synthase subunit PdxT from Caldicellulosiruptor bescii (strain ATCC BAA-1888 / DSM 6725 / KCTC 15123 / Z-1320) (Anaerocellum thermophilum).